The sequence spans 277 residues: Urease accessory protein UreD (277 aa).

This sequence belongs to the UreD family. In terms of assembly, ureD, UreF and UreG form a complex that acts as a GTP-hydrolysis-dependent molecular chaperone, activating the urease apoprotein by helping to assemble the nickel containing metallocenter of UreC. The UreE protein probably delivers the nickel.

The protein localises to the cytoplasm. Functionally, required for maturation of urease via the functional incorporation of the urease nickel metallocenter. The polypeptide is Urease accessory protein UreD (Yersinia pestis bv. Antiqua (strain Antiqua)).